Here is a 564-residue protein sequence, read N- to C-terminus: Septation ring formation regulator EzrA (564 aa).

Residues 1–4 (MVLF) lie on the Extracellular side of the membrane. The helical transmembrane segment at 5-23 (IILAILVVILIAIGVLFYM) threads the bilayer. Over 24–564 (RSNKRNLIEK…KHIEEQVIKE (541 aa)) the chain is Cytoplasmic. 4 coiled-coil regions span residues 84–126 (VEEK…HQVT), 165–223 (EAAE…LIRE), 271–303 (MISR…YEVK), and 350–435 (VRQF…RRLL).

This sequence belongs to the EzrA family.

Its subcellular location is the cell membrane. Negative regulator of FtsZ ring formation; modulates the frequency and position of FtsZ ring formation. Inhibits FtsZ ring formation at polar sites. Interacts either with FtsZ or with one of its binding partners to promote depolymerization. This chain is Septation ring formation regulator EzrA, found in Staphylococcus epidermidis (strain ATCC 35984 / DSM 28319 / BCRC 17069 / CCUG 31568 / BM 3577 / RP62A).